An 86-amino-acid polypeptide reads, in one-letter code: Weak neurotoxin 9 (86 aa).

Residues 1-21 form the signal peptide; it reads MKTLLLTLVVVTIVCLDLGYT. Intrachain disulfides connect cysteine 24–cysteine 45, cysteine 27–cysteine 32, cysteine 38–cysteine 63, cysteine 67–cysteine 78, and cysteine 79–cysteine 84.

It belongs to the three-finger toxin family. Ancestral subfamily. Orphan group II sub-subfamily. As to expression, expressed by the venom gland.

The protein resides in the secreted. Functionally, binds with low affinity to muscular (alpha-1-beta-1-delta-epsilon/CHRNA1-CHRNB1-CHRND-CHRNE) and very low affinity to neuronal (alpha-7/CHRNA7) nicotinic acetylcholine receptor (nAChR). This is Weak neurotoxin 9 from Naja sputatrix (Malayan spitting cobra).